The sequence spans 60 residues: UPF0434 protein Vapar_2640 (60 aa).

It belongs to the UPF0434 family.

This chain is UPF0434 protein Vapar_2640, found in Variovorax paradoxus (strain S110).